The following is a 199-amino-acid chain: Molybdenum cofactor guanylyltransferase (199 aa).

Residues 12 to 14, K25, N53, D71, and D101 contribute to the GTP site; that span reads LAG. D101 is a Mg(2+) binding site.

It belongs to the MobA family. Monomer. Requires Mg(2+) as cofactor.

The protein resides in the cytoplasm. The enzyme catalyses Mo-molybdopterin + GTP + H(+) = Mo-molybdopterin guanine dinucleotide + diphosphate. In terms of biological role, transfers a GMP moiety from GTP to Mo-molybdopterin (Mo-MPT) cofactor (Moco or molybdenum cofactor) to form Mo-molybdopterin guanine dinucleotide (Mo-MGD) cofactor. The protein is Molybdenum cofactor guanylyltransferase of Cupriavidus necator (strain ATCC 17699 / DSM 428 / KCTC 22496 / NCIMB 10442 / H16 / Stanier 337) (Ralstonia eutropha).